We begin with the raw amino-acid sequence, 466 residues long: MSSPNTWSTGSTVYSPVFSQKMTLWILLLLSLYPGFTSQKSDDDYEDYASNKTWVLTPKVPEGDVTVILNNLLEGYDNKLRPDIGVKPTLIHTDMYVNSIGPVNAINMEYTIDIFFAQTWYDRRLKFNSTIKVLRLNSNMVGKIWIPDTFFRNSKKADAHWITTPNRMLRIWNDGRVLYTLRLTIDAECQLQLHNFPMDEHSCPLEFSSYGYPREEIVYQWKRSSVEVGDTRSWRLYQFSFVGLRNTTEVVKTTSGDYVVMSVYFDLSRRMGYFTIQTYIPCTLIVVLSWVSFWINKDAVPARTSLGITTVLTMTTLSTIARKSLPKVSYVTAMDLFVSVCFIFVFSALVEYGTLHYFVSNRKPSKDKDKKKKNPAPTIDIRPRSATIQMNNATHLQERDEEYGYECLDGKDCASFFCCFEDCRTGAWRHGRIHIRIAKMDSYARIFFPTAFCLFNLVYWVSYLYL.

An N-terminal signal peptide occupies residues 1–38; that stretch reads MSSPNTWSTGSTVYSPVFSQKMTLWILLLLSLYPGFTS. At 39-274 the chain is on the extracellular side; it reads QKSDDDYEDY…FDLSRRMGYF (236 aa). N-linked (GlcNAc...) asparagine glycans are attached at residues Asn-51 and Asn-128. A disulfide bridge links Cys-189 with Cys-203. An N-linked (GlcNAc...) asparagine glycan is attached at Asn-246. The chain crosses the membrane as a helical span at residues 275-295; the sequence is TIQTYIPCTLIVVLSWVSFWI. Topologically, residues 296 to 301 are cytoplasmic; sequence NKDAVP. The helical transmembrane segment at 302-321 threads the bilayer; it reads ARTSLGITTVLTMTTLSTIA. At 322–333 the chain is on the extracellular side; it reads RKSLPKVSYVTA. The chain crosses the membrane as a helical span at residues 334-358; it reads MDLFVSVCFIFVFSALVEYGTLHYF. The Cytoplasmic segment spans residues 359–442; that stretch reads VSNRKPSKDK…IHIRIAKMDS (84 aa). A helical transmembrane segment spans residues 443–463; that stretch reads YARIFFPTAFCLFNLVYWVSY. The Extracellular portion of the chain corresponds to 464–466; that stretch reads LYL.

Belongs to the ligand-gated ion channel (TC 1.A.9) family. Gamma-aminobutyric acid receptor (TC 1.A.9.5) subfamily. GABRG2 sub-subfamily. Heteropentamer, formed by a combination of alpha (GABRA1-6), beta (GABRB1-3), gamma (GABRG1-3), delta (GABRD), epsilon (GABRE), rho (GABRR1-3), pi (GABRP) and theta (GABRQ) chains, each subunit exhibiting distinct physiological and pharmacological properties. Interacts with GABARAP. Interacts with KIF21B. Identified in a complex of 720 kDa composed of LHFPL4, NLGN2, GABRA1, GABRB2, GABRG2 and GABRB3. Interacts with LHFPL4. Interacts with SHISA7; interaction leads to the regulation of GABA(A) receptor trafficking, channel deactivation kinetics and pharmacology. In terms of processing, palmitoylated by ZDHHC3/GODZ; required for the accumulation of GABA(A) receptors at the postsynaptic membrane of inhibitory GABAergic synapses. Glycosylated. As to expression, expressed in brain (at protein level). Expressed in lungs, in alveolar epithelium.

The protein localises to the postsynaptic cell membrane. It localises to the cell membrane. Its subcellular location is the cell projection. It is found in the dendrite. The protein resides in the cytoplasmic vesicle membrane. The catalysed reaction is chloride(in) = chloride(out). Its activity is regulated as follows. Allosterically activated by benzodiazepines. Activated by pentobarbital. Inhibited by the antagonist bicuculline. Inhibited by zinc ions. Potentiated by histamine. Gamma subunit of the heteropentameric ligand-gated chloride channel gated by gamma-aminobutyric acid (GABA), a major inhibitory neurotransmitter in the brain. GABA-gated chloride channels, also named GABA(A) receptors (GABAAR), consist of five subunits arranged around a central pore and contain GABA active binding site(s) located at the alpha and beta subunit interface(s). When activated by GABA, GABAARs selectively allow the flow of chloride anions across the cell membrane down their electrochemical gradient. Gamma-2/GABRG2-containing GABAARs are found at both synaptic and extrasynaptic sites. Chloride influx into the postsynaptic neuron following GABAAR opening decreases the neuron ability to generate a new action potential, thereby reducing nerve transmission. GABAARs containing alpha-1 and beta-2 or -3 subunits exhibit synaptogenic activity; the gamma-2 subunit being necessary but not sufficient to induce rapid synaptic contacts formation. Extrasynaptic gamma-2-containing receptors contribute to the tonic GABAergic inhibition. GABAARs function also as histamine receptor where histamine binds at the interface of two neighboring beta subunits and potentiates GABA response in a gamma-2 subunit-controlled manner. This Rattus norvegicus (Rat) protein is Gamma-aminobutyric acid receptor subunit gamma-2.